The following is a 144-amino-acid chain: D-aminoacyl-tRNA deacylase (144 aa).

Residues glycine 136 to proline 137 carry the Gly-cisPro motif, important for rejection of L-amino acids motif.

The protein belongs to the DTD family. Homodimer.

It localises to the cytoplasm. The catalysed reaction is glycyl-tRNA(Ala) + H2O = tRNA(Ala) + glycine + H(+). It carries out the reaction a D-aminoacyl-tRNA + H2O = a tRNA + a D-alpha-amino acid + H(+). Functionally, an aminoacyl-tRNA editing enzyme that deacylates mischarged D-aminoacyl-tRNAs. Also deacylates mischarged glycyl-tRNA(Ala), protecting cells against glycine mischarging by AlaRS. Acts via tRNA-based rather than protein-based catalysis; rejects L-amino acids rather than detecting D-amino acids in the active site. By recycling D-aminoacyl-tRNA to D-amino acids and free tRNA molecules, this enzyme counteracts the toxicity associated with the formation of D-aminoacyl-tRNA entities in vivo and helps enforce protein L-homochirality. The chain is D-aminoacyl-tRNA deacylase from Vibrio vulnificus (strain CMCP6).